The primary structure comprises 284 residues: Pantothenate synthetase (284 aa).

Met31–His38 is a binding site for ATP. The active-site Proton donor is His38. Gln62 lines the (R)-pantoate pocket. Gln62 serves as a coordination point for beta-alanine. Gly150–Asp153 contributes to the ATP binding site. A (R)-pantoate-binding site is contributed by Gln156. ATP is bound by residues Val179 and Met187 to Arg190.

The protein belongs to the pantothenate synthetase family. As to quaternary structure, homodimer.

It localises to the cytoplasm. It catalyses the reaction (R)-pantoate + beta-alanine + ATP = (R)-pantothenate + AMP + diphosphate + H(+). It functions in the pathway cofactor biosynthesis; (R)-pantothenate biosynthesis; (R)-pantothenate from (R)-pantoate and beta-alanine: step 1/1. Catalyzes the condensation of pantoate with beta-alanine in an ATP-dependent reaction via a pantoyl-adenylate intermediate. This is Pantothenate synthetase from Xanthomonas campestris pv. campestris (strain 8004).